Consider the following 364-residue polypeptide: MRILVSGGGTGGHIYPALALIREIKKLHPEARFLYIGTENGLESTIVPKAGIPFQSIVISGFKRKISFDNVKTVMRFVKGVQDSKRYIRRFNPDVVIGTGGYVCGPVVYAAAKLGIPTIVHEQNSVPGVTNKFLSRYVDKVAVCFEAAAEHFPQSKVVMTGNPRASEVMNQNGMKGKRSVGLSLSKKSVLIFGGSRGARPINDAFVEAIEQFGNKNYEVLYITGEVHYDKVMEIVREKGNPDNVMIKPFIHNMPEVLTGVDLVVSRAGATTLAELTALGKPSILIPSPYVTNNHQEKNAKSIVDKGAAKMLLEKDLTAETLLHNIDEILLNTQTLQNMKLAAKQLGIPDAANKLFEVMKQLMKK.

Residues 10–12 (TGG), N124, S195, I250, and Q295 each bind UDP-N-acetyl-alpha-D-glucosamine.

The protein belongs to the glycosyltransferase 28 family. MurG subfamily.

Its subcellular location is the cell membrane. The enzyme catalyses di-trans,octa-cis-undecaprenyl diphospho-N-acetyl-alpha-D-muramoyl-L-alanyl-D-glutamyl-meso-2,6-diaminopimeloyl-D-alanyl-D-alanine + UDP-N-acetyl-alpha-D-glucosamine = di-trans,octa-cis-undecaprenyl diphospho-[N-acetyl-alpha-D-glucosaminyl-(1-&gt;4)]-N-acetyl-alpha-D-muramoyl-L-alanyl-D-glutamyl-meso-2,6-diaminopimeloyl-D-alanyl-D-alanine + UDP + H(+). It participates in cell wall biogenesis; peptidoglycan biosynthesis. Cell wall formation. Catalyzes the transfer of a GlcNAc subunit on undecaprenyl-pyrophosphoryl-MurNAc-pentapeptide (lipid intermediate I) to form undecaprenyl-pyrophosphoryl-MurNAc-(pentapeptide)GlcNAc (lipid intermediate II). In Bacillus cytotoxicus (strain DSM 22905 / CIP 110041 / 391-98 / NVH 391-98), this protein is UDP-N-acetylglucosamine--N-acetylmuramyl-(pentapeptide) pyrophosphoryl-undecaprenol N-acetylglucosamine transferase.